The sequence spans 328 residues: DNA-directed RNA polymerase subunit alpha (328 aa).

Residues 1 to 234 (MQNSPTEYLK…GQLSVFADLE (234 aa)) are alpha N-terminal domain (alpha-NTD). The interval 248–328 (VDPILLRPVD…NWPPAGLEKV (81 aa)) is alpha C-terminal domain (alpha-CTD).

It belongs to the RNA polymerase alpha chain family. Homodimer. The RNAP catalytic core consists of 2 alpha, 1 beta, 1 beta' and 1 omega subunit. When a sigma factor is associated with the core the holoenzyme is formed, which can initiate transcription.

It carries out the reaction RNA(n) + a ribonucleoside 5'-triphosphate = RNA(n+1) + diphosphate. DNA-dependent RNA polymerase catalyzes the transcription of DNA into RNA using the four ribonucleoside triphosphates as substrates. The chain is DNA-directed RNA polymerase subunit alpha from Methylobacillus flagellatus (strain ATCC 51484 / DSM 6875 / VKM B-1610 / KT).